The chain runs to 303 residues: Sodium/potassium-transporting ATPase subunit beta-1 (303 aa).

Residues 1 to 34 (MPAATKDSDGGWKKFLWNSEKKEFLGRTGGSWAK) lie on the Cytoplasmic side of the membrane. Residues 35–55 (ILLFYVIFYGCLAGIFIGTIQ) traverse the membrane as a helical; Signal-anchor for type II membrane protein segment. Residues 56-303 (ALLLTINDFK…FDVKFTINES (248 aa)) are Extracellular-facing. A glycan (N-linked (GlcNAc...) asparagine) is linked at Asn113. 2 cysteine pairs are disulfide-bonded: Cys126/Cys149 and Cys159/Cys175. Residues Asn194 and Asn264 are each glycosylated (N-linked (GlcNAc...) asparagine). A disulfide bond links Cys214 and Cys275.

This sequence belongs to the X(+)/potassium ATPases subunit beta family. In terms of assembly, the sodium/potassium-transporting ATPase is composed of a catalytic alpha subunit, an auxiliary non-catalytic beta subunit and an additional regulatory subunit. In terms of tissue distribution, detected in all tissues except liver and cardiac muscle. Highest levels found in intestine, ovary and kidney with marginally lower levels in brain, spleen, esophagus, eye and pancreas, intermediate levels in gill and low levels in white and red skeletal muscle.

It is found in the cell membrane. This is the non-catalytic component of the active enzyme, which catalyzes the hydrolysis of ATP coupled with the exchange of Na(+) and K(+) ions across the plasma membrane. The beta subunit regulates, through assembly of alpha/beta heterodimers, the number of sodium pumps transported to the plasma membrane. This chain is Sodium/potassium-transporting ATPase subunit beta-1 (atp1b1), found in Anguilla anguilla (European freshwater eel).